Consider the following 497-residue polypeptide: Di-/tripeptide transporter (497 aa).

At methionine 1 to arginine 36 the chain is on the cytoplasmic side. The helical transmembrane segment at alanine 37–glycine 55 threads the bilayer. The Extracellular segment spans residues leucine 56–isoleucine 64. The helical transmembrane segment at valine 65–alanine 83 threads the bilayer. The Cytoplasmic segment spans residues aspartate 84–threonine 92. A helical transmembrane segment spans residues isoleucine 93 to phenylalanine 111. The Extracellular segment spans residues glycine 112–serine 115. A helical membrane pass occupies residues leucine 116–isoleucine 134. Topologically, residues serine 135–asparagine 154 are cytoplasmic. A helical transmembrane segment spans residues isoleucine 155–threonine 173. The Extracellular portion of the chain corresponds to valine 174–histidine 181. A helical transmembrane segment spans residues leucine 182 to tyrosine 200. Topologically, residues glycine 201–asparagine 224 are cytoplasmic. The helical transmembrane segment at phenylalanine 225–leucine 243 threads the bilayer. Topologically, residues tyrosine 244–asparagine 254 are extracellular. A helical membrane pass occupies residues phenylalanine 255 to methionine 273. The Cytoplasmic segment spans residues methionine 274–proline 293. Residues leucine 294–isoleucine 312 traverse the membrane as a helical segment. The Extracellular segment spans residues alanine 313 to proline 335. A helical membrane pass occupies residues serine 336–valine 354. At arginine 355–glycine 372 the chain is on the cytoplasmic side. Residues leucine 373–leucine 391 form a helical membrane-spanning segment. Topologically, residues asparagine 392–serine 425 are extracellular. Residues threonine 426–alanine 444 traverse the membrane as a helical segment. Residues aspartate 445–arginine 497 lie on the Cytoplasmic side of the membrane.

This sequence belongs to the major facilitator superfamily. Proton-dependent oligopeptide transporter (POT/PTR) (TC 2.A.17) family.

The protein resides in the cell membrane. Proton-dependent uptake of di- or tri-peptides. This Lactococcus lactis subsp. lactis (strain IL1403) (Streptococcus lactis) protein is Di-/tripeptide transporter (dtpT).